The chain runs to 219 residues: Ribose-5-phosphate isomerase A (219 aa).

Substrate-binding positions include 28–31 (TGST), 81–84 (DGAD), and 94–97 (KGGG). Residue Glu103 is the Proton acceptor of the active site. Residue Lys121 coordinates substrate.

This sequence belongs to the ribose 5-phosphate isomerase family. Homodimer.

It carries out the reaction aldehydo-D-ribose 5-phosphate = D-ribulose 5-phosphate. It participates in carbohydrate degradation; pentose phosphate pathway; D-ribose 5-phosphate from D-ribulose 5-phosphate (non-oxidative stage): step 1/1. Catalyzes the reversible conversion of ribose-5-phosphate to ribulose 5-phosphate. This Shewanella loihica (strain ATCC BAA-1088 / PV-4) protein is Ribose-5-phosphate isomerase A.